Here is a 398-residue protein sequence, read N- to C-terminus: DJ-1 protein homolog E (398 aa).

PfpI endopeptidase domains follow at residues 7 to 199 (KSAL…ESLG) and 210 to 393 (ASVL…TALG).

It belongs to the peptidase C56 family. As to quaternary structure, homotrimer. Expressed in roots and cauline leaves.

Its function is as follows. May be involved in oxidative stress response. This Arabidopsis thaliana (Mouse-ear cress) protein is DJ-1 protein homolog E (DJ1E).